A 222-amino-acid polypeptide reads, in one-letter code: Phosphatidylinositol phosphate synthase (222 aa).

31 to 34 lines the a CDP-1,2-diacyl-sn-glycerol pocket; that stretch reads DIVT. A run of 2 helical transmembrane segments spans residues 32 to 49 and 55 to 74; these read IVTLAGTAAAVIGALTLF and WWGAVVVSFFVLADMLDGAM. Mg(2+)-binding residues include aspartate 68 and aspartate 71. A CDP-1,2-diacyl-sn-glycerol is bound by residues glycine 72, arginine 76, and threonine 82. Positions 89 and 93 each coordinate Mg(2+). Catalysis depends on aspartate 93, which acts as the Proton acceptor. 4 helical membrane passes run 95 to 112, 118 to 136, 156 to 173, and 179 to 196; these read LGDGAVFAGLTWWAAFGL, VVATLICLVTSQVISYIKA, LVIVLIGAGLSDLPFFPL, and VAMWVLAVASVVTLLQRV.

Belongs to the CDP-alcohol phosphatidyltransferase class-I family. Homodimer. Requires Mg(2+) as cofactor.

It is found in the cell membrane. Its subcellular location is the secreted. The protein localises to the cell wall. It catalyses the reaction a CDP-1,2-diacyl-sn-glycerol + 1D-myo-inositol 3-phosphate = a 1,2-diacyl-sn-glycero-3-phospho-(1D-myo-inositol-3-phosphate) + CMP + H(+). It carries out the reaction 1,2-di-(9Z-octadecenoyl)-sn-glycero-3-cytidine-5'-diphosphate + 1D-myo-inositol 3-phosphate = 1,2-di-(9Z-octadecenoyl)-sn-glycero-3-phospho-(1D-myo-inositol-3-phosphate) + CMP + H(+). The enzyme catalyses 1,2-dihexadecanoyl-sn-glycero-3-CDP + 1D-myo-inositol 3-phosphate = 1,2-dihexadecanoyl-sn-glycero-3-phospho-(1D-myo-inositol-3-phosphate) + CMP + H(+). The protein operates within phospholipid metabolism; phosphatidylinositol phosphate biosynthesis. With respect to regulation, competitively inhibited by several inositol 1-phosphate analogs, including the phosphonate analog 1-deoxy-1-phosphonomethyl-myo-inositol (Ino-C-P). This leads to inhibition of M.smegmatis growth. Catalyzes the conjugation of the 1'-hydroxyl group of D-myo-inositol-3-phosphate (also named L-myo-inositol-1-phosphate) with a lipid tail of cytidine diphosphate diacylglycerol (CDP-DAG), forming phosphatidylinositol phosphate (PIP) and CMP. PIP is a precursor of phosphatidylinositol (PI) which is an essential lipid for mycobacteria required for formation of their cell wall. Is essential to the survival of M.smegmatis. The chain is Phosphatidylinositol phosphate synthase from Mycolicibacterium smegmatis (strain ATCC 700084 / mc(2)155) (Mycobacterium smegmatis).